Here is a 572-residue protein sequence, read N- to C-terminus: Arginine--tRNA ligase (572 aa).

The 'HIGH' region signature appears at 127-137 (ANPTGPLHVGH).

This sequence belongs to the class-I aminoacyl-tRNA synthetase family. In terms of assembly, monomer.

It is found in the cytoplasm. It carries out the reaction tRNA(Arg) + L-arginine + ATP = L-arginyl-tRNA(Arg) + AMP + diphosphate. In Vesicomyosocius okutanii subsp. Calyptogena okutanii (strain HA), this protein is Arginine--tRNA ligase.